We begin with the raw amino-acid sequence, 49 residues long: Large ribosomal subunit protein bL33B (49 aa).

Belongs to the bacterial ribosomal protein bL33 family.

This Limosilactobacillus fermentum (strain NBRC 3956 / LMG 18251) (Lactobacillus fermentum) protein is Large ribosomal subunit protein bL33B.